We begin with the raw amino-acid sequence, 703 residues long: Subtilisin-like protease SBT4.7 (703 aa).

The N-terminal stretch at 1 to 19 (MAKRDYFCFVVLFLSSVSA) is a signal peptide. Positions 20-107 (VIDDPQNKQV…VFPNINYKLQ (88 aa)) are cleaved as a propeptide — activation peptide. The Inhibitor I9 domain maps to 29–106 (VYVVYMGSLP…SVFPNINYKL (78 aa)). In terms of domain architecture, Peptidase S8 spans 111–556 (SWDFLGLKEG…AGHVDQIAAI (446 aa)). The active-site Charge relay system is Asp-139. Asn-170 carries N-linked (GlcNAc...) asparagine glycosylation. The Charge relay system role is filled by His-194. 4 N-linked (GlcNAc...) asparagine glycosylation sites follow: Asn-217, Asn-360, Asn-416, and Asn-433. The region spanning 350-411 (KYPLVYGDNF…LLPPDDFDSL (62 aa)) is the PA domain. Catalysis depends on Ser-495, which acts as the Charge relay system. Asn-577, Asn-615, and Asn-633 each carry an N-linked (GlcNAc...) asparagine glycan.

This sequence belongs to the peptidase S8 family. In terms of processing, the C-terminal propeptide is autocleaved.

The protein localises to the secreted. This is Subtilisin-like protease SBT4.7 from Arabidopsis thaliana (Mouse-ear cress).